The primary structure comprises 51 residues: Large ribosomal subunit protein eL39 (51 aa).

This sequence belongs to the eukaryotic ribosomal protein eL39 family.

The sequence is that of Large ribosomal subunit protein eL39 from Thermococcus onnurineus (strain NA1).